The sequence spans 626 residues: Chaperone protein HtpG (626 aa).

Residues 1–329 (MSEETLSFQA…SSDLPLNVSR (329 aa)) form an a; substrate-binding region. The segment at 330–549 (EMLQDDPRLR…EGAMSLHLQK (220 aa)) is b. The c stretch occupies residues 550 to 626 (LLRQANQGSE…LTEVMGKGLI (77 aa)).

The protein belongs to the heat shock protein 90 family. In terms of assembly, homodimer.

The protein resides in the cytoplasm. Functionally, molecular chaperone. Has ATPase activity. The polypeptide is Chaperone protein HtpG (Rhodospirillum rubrum (strain ATCC 11170 / ATH 1.1.1 / DSM 467 / LMG 4362 / NCIMB 8255 / S1)).